A 320-amino-acid polypeptide reads, in one-letter code: Malate dehydrogenase (320 aa).

Residues 10–15 and aspartate 34 contribute to the NAD(+) site; that span reads GSGMIG. The substrate site is built by arginine 83 and arginine 89. NAD(+) is bound by residues asparagine 96 and 119-121; that span reads ITN. 2 residues coordinate substrate: asparagine 121 and arginine 152. Histidine 176 acts as the Proton acceptor in catalysis.

Belongs to the LDH/MDH superfamily. MDH type 3 family.

The catalysed reaction is (S)-malate + NAD(+) = oxaloacetate + NADH + H(+). In terms of biological role, catalyzes the reversible oxidation of malate to oxaloacetate. The chain is Malate dehydrogenase from Agrobacterium fabrum (strain C58 / ATCC 33970) (Agrobacterium tumefaciens (strain C58)).